Consider the following 129-residue polypeptide: Follitropin subunit beta (129 aa).

The signal sequence occupies residues 1 to 20 (MKTVQFCFLFCCWKAICCNS). Intrachain disulfides connect cysteine 21-cysteine 69, cysteine 35-cysteine 84, cysteine 38-cysteine 122, cysteine 46-cysteine 100, cysteine 50-cysteine 102, and cysteine 105-cysteine 112. Residues asparagine 25 and asparagine 42 are each glycosylated (N-linked (GlcNAc...) asparagine).

This sequence belongs to the glycoprotein hormones subunit beta family. As to quaternary structure, heterodimer. The active follitropin is a heterodimer composed of an alpha chain/CGA shared with other hormones and a unique beta chain/FSHB shown here.

Its subcellular location is the secreted. Together with the alpha chain CGA constitutes follitropin, the follicle-stimulating hormone, and provides its biological specificity to the hormone heterodimer. Binds FSHR, a G protein-coupled receptor, on target cells to activate downstream signaling pathways. Follitropin is involved in follicle development and spermatogenesis in reproductive organs. The polypeptide is Follitropin subunit beta (FSHB) (Saimiri boliviensis boliviensis (Bolivian squirrel monkey)).